The following is a 578-amino-acid chain: Triokinase/FMN cyclase (578 aa).

The DhaK domain maps to 9-336 (SVAGCADDAL…IDAETTASAW (328 aa)). Residues 56–59 (GSGH), K109, and D114 each bind dihydroxyacetone. H221 serves as the catalytic Tele-hemiaminal-histidine intermediate. S350 carries the post-translational modification Phosphoserine. Residues 372–571 (KQMVLVLEWV…AAAILRAILE (200 aa)) form the DhaL domain. ATP is bound by residues 401 to 404 (DGDC), 446 to 447 (SS), G486, and 494 to 495 (TM). A phosphoserine mark is found at S511 and S545. Residue 556–558 (DPG) coordinates ATP.

Homodimer. Interacts with IFIH1 (via the CARD domains), the interaction is inhibited by viral infection. Mg(2+) is required as a cofactor. It depends on Mn(2+) as a cofactor. Requires Co(2+) as cofactor.

It carries out the reaction dihydroxyacetone + ATP = dihydroxyacetone phosphate + ADP + H(+). The catalysed reaction is D-glyceraldehyde + ATP = D-glyceraldehyde 3-phosphate + ADP + H(+). The enzyme catalyses FAD = riboflavin cyclic-4',5'-phosphate + AMP + H(+). Its activity is regulated as follows. Each activity is inhibited by the substrate(s) of the other. Catalyzes both the phosphorylation of dihydroxyacetone and of glyceraldehyde, and the splitting of ribonucleoside diphosphate-X compounds among which FAD is the best substrate. Represses IFIH1-mediated cellular antiviral response. The chain is Triokinase/FMN cyclase (TKFC) from Bos taurus (Bovine).